Here is a 148-residue protein sequence, read N- to C-terminus: Probable 4-amino-4-deoxy-L-arabinose-phosphoundecaprenol flippase subunit ArnF (148 aa).

At 1 to 23 (MRGDNTGVGKEPAVTERPAIKGY) the chain is on the cytoplasmic side. The helical transmembrane segment at 24-44 (LYVLGSILLVTLAQLAMKWGV) threads the bilayer. Residues 45–63 (MQLPAWQASLDIMLAHPVP) are Periplasmic-facing. A helical transmembrane segment spans residues 64 to 84 (LLVITAGVGCYALSLLCWLAA). Over 85 to 91 (LHFTPLN) the chain is Cytoplasmic. A helical membrane pass occupies residues 92-112 (IAYPLLSTSYALVYLLAVSIP). Topologically, residues 113–117 (SFAEP) are periplasmic. A helical transmembrane segment spans residues 118–138 (LEPGKAVGVIFILLGAVLVGI). Residues 139 to 148 (KPVGRKRNAH) lie on the Cytoplasmic side of the membrane.

The protein belongs to the ArnF family. As to quaternary structure, heterodimer of ArnE and ArnF.

Its subcellular location is the cell inner membrane. Its pathway is bacterial outer membrane biogenesis; lipopolysaccharide biosynthesis. Functionally, translocates 4-amino-4-deoxy-L-arabinose-phosphoundecaprenol (alpha-L-Ara4N-phosphoundecaprenol) from the cytoplasmic to the periplasmic side of the inner membrane. The polypeptide is Probable 4-amino-4-deoxy-L-arabinose-phosphoundecaprenol flippase subunit ArnF (Aeromonas salmonicida (strain A449)).